The primary structure comprises 41 residues: Photosystem II reaction center protein L (41 aa).

A helical membrane pass occupies residues 20–40; the sequence is SLYLGLLLVFVVGLLFSSYFL.

It belongs to the PsbL family. As to quaternary structure, PSII is composed of 1 copy each of membrane proteins PsbA, PsbB, PsbC, PsbD, PsbE, PsbF, PsbH, PsbI, PsbJ, PsbK, PsbL, PsbM, PsbT, PsbX, PsbY, PsbZ, Psb30/Ycf12, peripheral proteins PsbO, CyanoQ (PsbQ), PsbU, PsbV and a large number of cofactors. It forms dimeric complexes.

The protein resides in the cellular thylakoid membrane. One of the components of the core complex of photosystem II (PSII). PSII is a light-driven water:plastoquinone oxidoreductase that uses light energy to abstract electrons from H(2)O, generating O(2) and a proton gradient subsequently used for ATP formation. It consists of a core antenna complex that captures photons, and an electron transfer chain that converts photonic excitation into a charge separation. This subunit is found at the monomer-monomer interface and is required for correct PSII assembly and/or dimerization. In Synechococcus sp. (strain JA-2-3B'a(2-13)) (Cyanobacteria bacterium Yellowstone B-Prime), this protein is Photosystem II reaction center protein L.